We begin with the raw amino-acid sequence, 256 residues long: Hydroxyacylglutathione hydrolase (256 aa).

Zn(2+)-binding residues include histidine 53, histidine 55, aspartate 57, histidine 58, histidine 113, aspartate 130, and histidine 168.

It belongs to the metallo-beta-lactamase superfamily. Glyoxalase II family. Monomer. Requires Zn(2+) as cofactor.

It carries out the reaction an S-(2-hydroxyacyl)glutathione + H2O = a 2-hydroxy carboxylate + glutathione + H(+). Its pathway is secondary metabolite metabolism; methylglyoxal degradation; (R)-lactate from methylglyoxal: step 2/2. In terms of biological role, thiolesterase that catalyzes the hydrolysis of S-D-lactoyl-glutathione to form glutathione and D-lactic acid. The sequence is that of Hydroxyacylglutathione hydrolase from Tolumonas auensis (strain DSM 9187 / NBRC 110442 / TA 4).